A 166-amino-acid chain; its full sequence is Interferon gamma (166 aa).

The N-terminal stretch at 1–23 is a signal peptide; it reads MKYTSSFLALLLSVLLGFSGSYG. At Q24 the chain carries Pyrrolidone carboxylic acid. Residues N39 and N106 are each glycosylated (N-linked (GlcNAc...) asparagine).

It belongs to the type II (or gamma) interferon family. As to quaternary structure, homodimer. Interacts with IFNGR1 (via extracellular domain); this interaction promotes IFNGR1 dimerization. In terms of tissue distribution, released primarily from activated T lymphocytes.

It localises to the secreted. Functionally, type II interferon produced by immune cells such as T-cells and NK cells that plays crucial roles in antimicrobial, antiviral, and antitumor responses by activating effector immune cells and enhancing antigen presentation. Primarily signals through the JAK-STAT pathway after interaction with its receptor IFNGR1 to affect gene regulation. Upon IFNG binding, IFNGR1 intracellular domain opens out to allow association of downstream signaling components JAK2, JAK1 and STAT1, leading to STAT1 activation, nuclear translocation and transcription of IFNG-regulated genes. Many of the induced genes are transcription factors such as IRF1 that are able to further drive regulation of a next wave of transcription. Plays a role in class I antigen presentation pathway by inducing a replacement of catalytic proteasome subunits with immunoproteasome subunits. In turn, increases the quantity, quality, and repertoire of peptides for class I MHC loading. Increases the efficiency of peptide generation also by inducing the expression of activator PA28 that associates with the proteasome and alters its proteolytic cleavage preference. Up-regulates as well MHC II complexes on the cell surface by promoting expression of several key molecules such as cathepsins B/CTSB, H/CTSH, and L/CTSL. Participates in the regulation of hematopoietic stem cells during development and under homeostatic conditions by affecting their development, quiescence, and differentiation. This chain is Interferon gamma (IFNG), found in Capra hircus (Goat).